The following is a 330-amino-acid chain: Putative F-box protein At1g57690 (330 aa).

In terms of domain architecture, F-box spans V25–Y72.

The polypeptide is Putative F-box protein At1g57690 (Arabidopsis thaliana (Mouse-ear cress)).